The chain runs to 258 residues: DNA-directed RNA polymerase subunit Rpo3 (258 aa).

The protein belongs to the archaeal Rpo3/eukaryotic RPB3 RNA polymerase subunit family. In terms of assembly, part of the RNA polymerase complex.

The protein localises to the cytoplasm. The catalysed reaction is RNA(n) + a ribonucleoside 5'-triphosphate = RNA(n+1) + diphosphate. DNA-dependent RNA polymerase (RNAP) catalyzes the transcription of DNA into RNA using the four ribonucleoside triphosphates as substrates. The chain is DNA-directed RNA polymerase subunit Rpo3 from Pyrobaculum calidifontis (strain DSM 21063 / JCM 11548 / VA1).